The following is a 167-amino-acid chain: Leptin (167 aa).

An N-terminal signal peptide occupies residues 1–21 (MHCVPLFCFLWFCHHLYYSQA). Cysteine 117 and cysteine 167 are disulfide-bonded.

It belongs to the leptin family.

The protein resides in the secreted. Its function is as follows. Key player in the regulation of energy balance and body weight control. Once released into the circulation, has central and peripheral effects by binding LEPR, found in many tissues, which results in the activation of several major signaling pathways. In the hypothalamus, acts as an appetite-regulating factor that induces a decrease in food intake and an increase in energy consumption by inducing anorexinogenic factors and suppressing orexigenic neuropeptides, also regulates bone mass and secretion of hypothalamo-pituitary-adrenal hormones. In the periphery, increases basal metabolism, influences reproductive function, regulates pancreatic beta-cell function and insulin secretion, is pro-angiogenic for endothelial cell and affects innate and adaptive immunity. In the arcuate nucleus of the hypothalamus, activates by depolarization POMC neurons inducing FOS and SOCS3 expression to release anorexigenic peptides and inhibits by hyperpolarization NPY neurons inducing SOCS3 with a consequent reduction on release of orexigenic peptides. In addition to its known satiety inducing effect, has a modulatory role in nutrient absorption. In the intestine, reduces glucose absorption by enterocytes by activating PKC and leading to a sequential activation of p38, PI3K and ERK signaling pathways which exerts an inhibitory effect on glucose absorption. Acts as a growth factor on certain tissues, through the activation of different signaling pathways increases expression of genes involved in cell cycle regulation such as CCND1, via JAK2-STAT3 pathway, or VEGFA, via MAPK1/3 and PI3K-AKT1 pathways. May also play an apoptotic role via JAK2-STAT3 pathway and up-regulation of BIRC5 expression. Pro-angiogenic, has mitogenic activity on vascular endothelial cells and plays a role in matrix remodeling by regulating the expression of matrix metalloproteinases (MMPs) and tissue inhibitors of metalloproteinases (TIMPs). In innate immunity, modulates the activity and function of neutrophils by increasing chemotaxis and the secretion of oxygen radicals. Increases phagocytosis by macrophages and enhances secretion of pro-inflammatory mediators. Increases cytotoxic ability of NK cells. Plays a pro-inflammatory role, in synergy with IL1B, by inducing NOS2 which promotes the production of IL6, IL8 and Prostaglandin E2, through a signaling pathway that involves JAK2, PI3K, MAP2K1/MEK1 and MAPK14/p38. In adaptive immunity, promotes the switch of memory T-cells towards T helper-1 cell immune responses. Increases CD4(+)CD25(-) T-cell proliferation and reduces autophagy during TCR (T-cell receptor) stimulation, through MTOR signaling pathway activation and BCL2 up-regulation. In Sminthopsis crassicaudata (Fat-tailed dunnart), this protein is Leptin (LEP).